We begin with the raw amino-acid sequence, 85 residues long: U4-theraphotoxin-Hhn1c (85 aa).

Residues 1–22 (MKVTLIAIVTCAAVLVLHTTAA) form the signal peptide. A propeptide spanning residues 23–48 (EELEAESQLMEVGMPDTELAAVDEER) is cleaved from the precursor. Cystine bridges form between C52-C66, C56-C77, and C71-C82.

This sequence belongs to the neurotoxin 12 (Hwtx-2) family. 02 (Hwtx-2) subfamily. As to expression, expressed by the venom gland.

Its subcellular location is the secreted. Its function is as follows. Postsynaptic neurotoxin. This chain is U4-theraphotoxin-Hhn1c, found in Cyriopagopus hainanus (Chinese bird spider).